Reading from the N-terminus, the 118-residue chain is UPF0295 protein BA_0538/GBAA_0538/BAS0506 (118 aa).

Helical transmembrane passes span 12-32 (IRTFALSLVFIGLFIAYLGVF) and 43-63 (FMMVGFLAVIASTVVYFWIGM).

It belongs to the UPF0295 family.

It is found in the cell membrane. The sequence is that of UPF0295 protein BA_0538/GBAA_0538/BAS0506 from Bacillus anthracis.